The chain runs to 168 residues: Vasopressin-neurophysin 2-copeptin (168 aa).

An N-terminal signal peptide occupies residues 1–23 (MLAMMLNTTLSACFLSLLALTSA). Cys-24 and Cys-29 form a disulfide bridge. At Gly-32 the chain carries Glycine amide. 7 cysteine pairs are disulfide-bonded: Cys-45–Cys-89, Cys-48–Cys-62, Cys-56–Cys-79, Cys-63–Cys-69, Cys-96–Cys-108, Cys-102–Cys-120, and Cys-109–Cys-114. N-linked (GlcNAc...) asparagine glycosylation occurs at Asn-135.

This sequence belongs to the vasopressin/oxytocin family. Interacts with vasopressin receptors V1bR/AVPR1B (Ki=85 pM), V1aR/AVPR1A (Ki=0.6 nM) and V2R/AVPR2 (Ki=4.9 nM). Interacts with oxytocin receptor (OXTR) (Ki=110 nM).

The protein resides in the secreted. Neurophysin 2 specifically binds vasopressin. Functionally, vasopressin has a direct antidiuretic action on the kidney, it also causes vasoconstriction of the peripheral vessels. Acts by binding to vasopressin receptors (V1bR/AVPR1B, V1aR/AVPR1A, and V2R/AVPR2). This Rattus norvegicus (Rat) protein is Vasopressin-neurophysin 2-copeptin (Avp).